The primary structure comprises 745 residues: MKESFYIEGMTCTACSSGIERSLGRKSFVKKIEVSLLNKSANIEFNENETNLDEIFKLIEKLGYSPKKTLAEEKKEFFSPNVKLALAVIFTLFVVYLSMGAMLSPSLLPESLLTINHHSNFLNACLQLIGALIVMHLGRDFYIQGFKALWHRQPNMSSLIAIGTSAALISSLWQLYLVYTNHYTDQWSYGHYYFESVCVILMFVMVGKRIENVSKDKALDAMQALMKNAPKTALKMHNNQQIEVLVDSIVVGDILKVLPGSAIAVDGEIIEGEGELDESMLSGEALPVYKKVGDKVFSGTLNSNTSFLMKATQDNKNSTLSQIIEMIHNAQSSKAEISRLADKVSSVFVPSVIAIAVLAFVVWLIIAPKPDFWWNFRTALEVFVSVLVISCPCALGLATPMSILVANQKASSLGLFFKDAKSLEKARLVNTIVFDKTGTLTNGKPVVKSIHSNIELLELLSLASSIEKSSEHVIAKGIVEYAKERNAPLKDISEVKVKTGFGISAKVDYQGAKEIIKVGNSEFFNPINTLEIKENGILVFVGRAINEKEDELLGAFVLEDLPKKGVKEHIAQIKNLGINTFLLSGDNRENVKKCALELGIDGYISNAKPQDKLNKIKELKEKGRIVMMVGDGLNDAPSLAMSDVAVVMAKGSDVSVQAADIVSFNNDIKSVYSAIKLSQATIKNIKENLFWAFCYNSVFIPLACGVLYKANIMLSPAIAGLAMSLSSVSVVLNSQRLRNFKIKDH.

The HMA domain maps to 1 to 67 (MKESFYIEGM…LIEKLGYSPK (67 aa)). Residues 1 to 83 (MKESFYIEGM…KKEFFSPNVK (83 aa)) are Cytoplasmic-facing. Cu cation is bound by residues Cys-12 and Cys-15. A helical transmembrane segment spans residues 84–104 (LALAVIFTLFVVYLSMGAMLS). Topologically, residues 105–124 (PSLLPESLLTINHHSNFLNA) are extracellular. Residues 125–144 (CLQLIGALIVMHLGRDFYIQ) traverse the membrane as a helical segment. Over 145 to 151 (GFKALWH) the chain is Cytoplasmic. Residues 152-172 (RQPNMSSLIAIGTSAALISSL) traverse the membrane as a helical segment. The Extracellular segment spans residues 173 to 194 (WQLYLVYTNHYTDQWSYGHYYF). The chain crosses the membrane as a helical span at residues 195–215 (ESVCVILMFVMVGKRIENVSK). At 216-343 (DKALDAMQAL…KAEISRLADK (128 aa)) the chain is on the cytoplasmic side. The chain crosses the membrane as a helical span at residues 344–366 (VSSVFVPSVIAIAVLAFVVWLII). At 367–379 (APKPDFWWNFRTA) the chain is on the extracellular side. The helical transmembrane segment at 380–397 (LEVFVSVLVISCPCALGL) threads the bilayer. At 398 to 685 (ATPMSILVAN…KLSQATIKNI (288 aa)) the chain is on the cytoplasmic side. Residue Asp-435 is the 4-aspartylphosphate intermediate of the active site. Mg(2+)-binding residues include Asp-631 and Asp-635. A helical transmembrane segment spans residues 686-705 (KENLFWAFCYNSVFIPLACG). The Extracellular segment spans residues 706 to 716 (VLYKANIMLSP). A helical transmembrane segment spans residues 717-735 (AIAGLAMSLSSVSVVLNSQ). The Cytoplasmic segment spans residues 736–745 (RLRNFKIKDH).

The protein belongs to the cation transport ATPase (P-type) (TC 3.A.3) family. Type IB subfamily.

The protein resides in the cell membrane. The enzyme catalyses Cu(2+)(in) + ATP + H2O = Cu(2+)(out) + ADP + phosphate + H(+). Probably involved in copper export. In Helicobacter pylori (strain J99 / ATCC 700824) (Campylobacter pylori J99), this protein is Copper-transporting ATPase (copA).